The chain runs to 274 residues: 4-deoxy-L-threo-5-hexosulose-uronate ketol-isomerase (274 aa).

Residues His-192, His-194, Glu-199, and His-241 each contribute to the Zn(2+) site.

Belongs to the KduI family. Zn(2+) is required as a cofactor.

The catalysed reaction is 5-dehydro-4-deoxy-D-glucuronate = 3-deoxy-D-glycero-2,5-hexodiulosonate. It participates in glycan metabolism; pectin degradation; 2-dehydro-3-deoxy-D-gluconate from pectin: step 4/5. In terms of biological role, catalyzes the isomerization of 5-dehydro-4-deoxy-D-glucuronate to 3-deoxy-D-glycero-2,5-hexodiulosonate. In Agrobacterium fabrum (strain C58 / ATCC 33970) (Agrobacterium tumefaciens (strain C58)), this protein is 4-deoxy-L-threo-5-hexosulose-uronate ketol-isomerase.